Here is a 152-residue protein sequence, read N- to C-terminus: Transcriptional regulator MraZ (152 aa).

SpoVT-AbrB domains are found at residues 5–52 (ASAI…PIHE) and 81–124 (AHEV…DEQA).

The protein belongs to the MraZ family. As to quaternary structure, forms oligomers.

It is found in the cytoplasm. The protein localises to the nucleoid. This is Transcriptional regulator MraZ from Shewanella oneidensis (strain ATCC 700550 / JCM 31522 / CIP 106686 / LMG 19005 / NCIMB 14063 / MR-1).